A 200-amino-acid polypeptide reads, in one-letter code: NADH-quinone oxidoreductase subunit B (200 aa).

The [4Fe-4S] cluster site is built by C78, C79, C144, and C174.

This sequence belongs to the complex I 20 kDa subunit family. NDH-1 is composed of 14 different subunits. Subunits NuoB, C, D, E, F, and G constitute the peripheral sector of the complex. It depends on [4Fe-4S] cluster as a cofactor.

It is found in the cell membrane. It catalyses the reaction a quinone + NADH + 5 H(+)(in) = a quinol + NAD(+) + 4 H(+)(out). NDH-1 shuttles electrons from NADH, via FMN and iron-sulfur (Fe-S) centers, to quinones in the respiratory chain. The immediate electron acceptor for the enzyme in this species is believed to be ubiquinone. Couples the redox reaction to proton translocation (for every two electrons transferred, four hydrogen ions are translocated across the cytoplasmic membrane), and thus conserves the redox energy in a proton gradient. The chain is NADH-quinone oxidoreductase subunit B from Dehalococcoides mccartyi (strain CBDB1).